The following is a 318-amino-acid chain: Acetyl-coenzyme A carboxylase carboxyl transferase subunit alpha (318 aa).

The CoA carboxyltransferase C-terminal domain occupies 41–295; it reads HLEKKNEELT…KQRILTDLNE (255 aa).

Belongs to the AccA family. In terms of assembly, acetyl-CoA carboxylase is a heterohexamer composed of biotin carboxyl carrier protein (AccB), biotin carboxylase (AccC) and two subunits each of ACCase subunit alpha (AccA) and ACCase subunit beta (AccD).

The protein resides in the cytoplasm. It carries out the reaction N(6)-carboxybiotinyl-L-lysyl-[protein] + acetyl-CoA = N(6)-biotinyl-L-lysyl-[protein] + malonyl-CoA. It participates in lipid metabolism; malonyl-CoA biosynthesis; malonyl-CoA from acetyl-CoA: step 1/1. Functionally, component of the acetyl coenzyme A carboxylase (ACC) complex. First, biotin carboxylase catalyzes the carboxylation of biotin on its carrier protein (BCCP) and then the CO(2) group is transferred by the carboxyltransferase to acetyl-CoA to form malonyl-CoA. The sequence is that of Acetyl-coenzyme A carboxylase carboxyl transferase subunit alpha from Tolumonas auensis (strain DSM 9187 / NBRC 110442 / TA 4).